A 548-amino-acid chain; its full sequence is ATP synthase subunit alpha (548 aa).

An ATP-binding site is contributed by 172-179; that stretch reads GDRKTGKT. Positions 510 to 548 are disordered; sequence QFTTSSGESAAPSEPEAEALAADEVGQETVKVNRPAPKK. Over residues 514–531 the composition is skewed to low complexity; the sequence is SSGESAAPSEPEAEALAA.

This sequence belongs to the ATPase alpha/beta chains family. As to quaternary structure, F-type ATPases have 2 components, CF(1) - the catalytic core - and CF(0) - the membrane proton channel. CF(1) has five subunits: alpha(3), beta(3), gamma(1), delta(1), epsilon(1). CF(0) has three main subunits: a(1), b(2) and c(9-12). The alpha and beta chains form an alternating ring which encloses part of the gamma chain. CF(1) is attached to CF(0) by a central stalk formed by the gamma and epsilon chains, while a peripheral stalk is formed by the delta and b chains.

It localises to the cell membrane. It carries out the reaction ATP + H2O + 4 H(+)(in) = ADP + phosphate + 5 H(+)(out). Functionally, produces ATP from ADP in the presence of a proton gradient across the membrane. The alpha chain is a regulatory subunit. The polypeptide is ATP synthase subunit alpha (Saccharopolyspora erythraea (strain ATCC 11635 / DSM 40517 / JCM 4748 / NBRC 13426 / NCIMB 8594 / NRRL 2338)).